The following is a 331-amino-acid chain: Ketol-acid reductoisomerase (NADP(+)) (331 aa).

Residues 2–182 (AQLFYDTDAD…GGTRAGILET (181 aa)) enclose the KARI N-terminal Rossmann domain. Residues 25–28 (YGSQ), Ser-51, Ser-53, and 83–86 (DEFQ) each bind NADP(+). His-108 is a catalytic residue. Position 134 (Gly-134) interacts with NADP(+). A KARI C-terminal knotted domain is found at 183–328 (NFKEETETDL…KGLRSMFSWL (146 aa)). Mg(2+) contacts are provided by Asp-191, Glu-195, Glu-227, and Glu-231. Ser-252 contributes to the substrate binding site.

Belongs to the ketol-acid reductoisomerase family. Mg(2+) serves as cofactor.

It carries out the reaction (2R)-2,3-dihydroxy-3-methylbutanoate + NADP(+) = (2S)-2-acetolactate + NADPH + H(+). It catalyses the reaction (2R,3R)-2,3-dihydroxy-3-methylpentanoate + NADP(+) = (S)-2-ethyl-2-hydroxy-3-oxobutanoate + NADPH + H(+). It functions in the pathway amino-acid biosynthesis; L-isoleucine biosynthesis; L-isoleucine from 2-oxobutanoate: step 2/4. It participates in amino-acid biosynthesis; L-valine biosynthesis; L-valine from pyruvate: step 2/4. Involved in the biosynthesis of branched-chain amino acids (BCAA). Catalyzes an alkyl-migration followed by a ketol-acid reduction of (S)-2-acetolactate (S2AL) to yield (R)-2,3-dihydroxy-isovalerate. In the isomerase reaction, S2AL is rearranged via a Mg-dependent methyl migration to produce 3-hydroxy-3-methyl-2-ketobutyrate (HMKB). In the reductase reaction, this 2-ketoacid undergoes a metal-dependent reduction by NADPH to yield (R)-2,3-dihydroxy-isovalerate. This is Ketol-acid reductoisomerase (NADP(+)) from Synechococcus sp. (strain WH7803).